We begin with the raw amino-acid sequence, 2513 residues long: Polyprotein P1234 (2513 aa).

The region spanning 28–259 (EPKQVTPNDH…ESRKLLQSWH (232 aa)) is the Alphavirus-like MT domain. Residues 244–263 (GSTLYPESRKLLQSWHLPSV) form a nsP1 membrane-binding region. S-palmitoyl cysteine; by host attachment occurs at residues Cys-417 and Cys-419. Residues 690–842 (DLTSPPYHEF…HNICTQVYHK (153 aa)) form the (+)RNA virus helicase ATP-binding domain. A ribonucleoside 5'-triphosphate is bound at residue 721 to 728 (GVPGSGKS). One can recognise a (+)RNA virus helicase C-terminal domain in the interval 843–991 (SISRRCTLPV…IKEWEAEHAS (149 aa)). Residues 1004–1327 (DTFQNKANVC…NQLNAVYAGL (324 aa)) form the Peptidase C9 domain. A nucleolus localization signal region spans residues 1005–1024 (TFQNKANVCWAKCLVPILDT). Cys-1013 (for cysteine protease nsP2 activity) is an active-site residue. The Nuclear export signal motif lies at 1058–1067 (TRIYGVDLDS). Residue His-1083 is the For cysteine protease nsP2 activity of the active site. Residues 1182–1186 (PTKRV) carry the Nuclear localization signal motif. The ADP-D-ribose site is built by Asp-1343, Asn-1357, Gly-1365, Gly-1445, Val-1446, and Tyr-1447. The Zn(2+) site is built by Cys-1595, Cys-1597, Cys-1620, and Cys-1638. 2 consecutive short sequence motifs (FGDF; binding to host G3BP1) follow at residues 1851 to 1854 (FGDF) and 1869 to 1872 (FGDF). Residues 2267-2382 (DAVLETDIAS…HGVVSDALMA (116 aa)) enclose the RdRp catalytic domain.

As to quaternary structure, interacts with non-structural protein 3. Interacts with RNA-directed RNA polymerase nsP4. Interacts with protease nsP2. interacts with itself. Interacts with mRNA-capping enzyme nsP1. Interacts with host DDX1. Interacts with host DDX3. Interacts (via C-terminus) with host G3BP1; this interaction inhibits the formation of host stress granules on viral mRNAs and the nsp3-G3BP1 complexes bind viral RNAs and probably orchestrate the assembly of viral replication complexes. Interacts (via C-terminus) with host G3BP2; this interaction inhibits the formation of host stress granules on viral mRNAs and the nsp3-G3BP2 complexes bind viral RNAs and probably orchestrate the assembly of viral replication complexes. In terms of assembly, interacts with mRNA-capping enzyme nsP1. Interacts with protease nsP2. interacts with itself. As to quaternary structure, interacts with RNA-directed RNA polymerase nsP4. Interacts with mRNA-capping enzyme nsP1. Interacts with KPNA1/karyopherin-alpha1; this interaction probably allows the active transport of protease nsP2 into the host nucleus. Requires Mg(2+) as cofactor. Mn(2+) is required as a cofactor. Specific enzymatic cleavages in vivo yield mature proteins. The processing of the polyprotein is temporally regulated. In early stages (1.7 hpi), P1234 is first cleaved in trans through its nsP2 protease activity, releasing P123 and nsP4, which associate to form the early replication complex. At the same time, P1234 is also cut at the nsP1/nsP2 site early in infection but with lower efficiency. After replication of the viral minus-strand RNAs (4 hpi), the polyproteins are cut at the nsP1/nsP2 and nsP2/nsP3 sites very efficiently, preventing accumulation of P123 and P1234 and allowing the formation of the late replication complex. NsP3/nsP4 site is not cleaved anymore and P34 is produced rather than nsP4. In terms of processing, specific enzymatic cleavages in vivo yield mature proteins. The processing of the polyprotein is temporally regulated. In early stages (1.7 hpi), P123 is cleaved at the nsP1/nsP2 site with low efficiency. After replication of the viral minus-strand RNAs (4 hpi), the polyproteins are cut at the nsP1/nsP2 and nsP2/nsP3 sites very efficiently, preventing accumulation of P123 and allowing the formation of the late replication complex. Post-translationally, palmitoylated by host palmitoyltransferases ZDHHC2 and ZDHHC19. Phosphorylated by host on serines and threonines. In terms of processing, ubiquitinated; targets the protein for rapid degradation via the ubiquitin system. Nsp4 is present in extremely low quantities due to low frequency of translation through the amber stop-codon and the degradation by the ubiquitin pathway.

Its subcellular location is the host cytoplasmic vesicle membrane. It localises to the host cell membrane. The protein localises to the host cell projection. The protein resides in the host filopodium. It is found in the host nucleus. Its subcellular location is the host cytoplasm. The catalysed reaction is GTP + S-adenosyl-L-methionine = N(7)-methyl-GTP + S-adenosyl-L-homocysteine. It catalyses the reaction N(7)-methyl-GTP + L-histidyl-[protein] = N(tele)-(N(7)-methylguanosine 5'-phospho)-L-histidyl-[protein] + diphosphate. The enzyme catalyses N(tele)-(N(7)-methylguanosine 5'-phospho)-L-histidyl-[protein] + a 5'-end diphospho-(purine-ribonucleoside) in mRNA + H(+) = a 5'-end (N(7)-methyl 5'-triphosphoguanosine)-(purine-ribonucleoside) in mRNA + L-histidyl-[protein]. It carries out the reaction a 5'-end triphospho-ribonucleoside in mRNA + H2O = a 5'-end diphospho-ribonucleoside in mRNA + phosphate + H(+). The catalysed reaction is a ribonucleoside 5'-triphosphate + H2O = a ribonucleoside 5'-diphosphate + phosphate + H(+). It catalyses the reaction ATP + H2O = ADP + phosphate + H(+). The enzyme catalyses RNA(n) + a ribonucleoside 5'-triphosphate = RNA(n+1) + diphosphate. It carries out the reaction 4-O-(ADP-D-ribosyl)-L-aspartyl-[protein] + H2O = L-aspartyl-[protein] + ADP-D-ribose + H(+). The catalysed reaction is 5-O-(ADP-D-ribosyl)-L-glutamyl-[protein] + H2O = L-glutamyl-[protein] + ADP-D-ribose + H(+). It catalyses the reaction RNA(n) + ATP = RNA(n)-3'-adenine ribonucleotide + diphosphate. The enzyme catalyses ADP-alpha-D-ribose 1''-phosphate + H2O = ADP-D-ribose + phosphate. Its function is as follows. Inactive precursor of the viral replicase, which is activated by cleavages carried out by the viral protease nsP2. Functionally, the early replication complex formed by the polyprotein P123 and nsP4 synthesizes minus-strand RNAs. As soon P123 is cleaved into mature proteins, the plus-strand RNAs synthesis begins. Cytoplasmic capping enzyme that catalyzes two virus-specific reactions: methyltransferase and nsP1 guanylyltransferase. mRNA-capping is necessary since all viral RNAs are synthesized in the cytoplasm, and host capping enzymes are restricted to the nucleus. The enzymatic reaction involves a covalent link between 7-methyl-GMP and nsP1, whereas eukaryotic capping enzymes form a covalent complex only with GMP. nsP1 capping consists in the following reactions: GTP is first methylated into 7-methyl-GMP and then is covalently linked to nsP1 to form the m7GMp-nsP1 complex from which 7-methyl-GMP complex is transferred to the mRNA to create the cap structure. NsP1 is also needed for the initiation of the minus-strand RNAs synthesis. Probably serves as a membrane anchor for the replication complex composed of nsP1-nsP4. Palmitoylated nsP1 is remodeling host cell cytoskeleton, and induces filopodium-like structure formation at the surface of the host cell. In terms of biological role, multifunctional protein whose N-terminus is part of the RNA polymerase complex and displays NTPase, RNA triphosphatase and helicase activities. NTPase and RNA triphosphatase are involved in viral RNA capping and helicase keeps a check on the dsRNA replication intermediates. The C-terminus harbors a protease that specifically cleaves the polyproteins and releases the mature proteins. Required for the shutoff of minus-strand RNAs synthesis. Specifically inhibits the host IFN response by promoting the nuclear export of host STAT1. Also inhibits host transcription by inducing the rapid proteasome-dependent degradation of POLR2A, a catalytic subunit of the RNAPII complex. The resulting inhibition of cellular protein synthesis serves to ensure maximal viral gene expression and to evade host immune response. Its function is as follows. Seems to be essential for minus-strand RNAs and subgenomic 26S mRNAs synthesis. Displays mono-ADP-ribosylhydrolase activity. ADP-ribosylation is a post-translational modification that controls various processes of the host cell and the virus probably needs to revert it for optimal viral replication. Binds proteins of G3BP family and sequesters them into the viral RNA replication complexes thereby inhibiting the formation of host stress granules on viral mRNAs. The nsp3-G3BP complexes bind viral RNAs and probably orchestrate the assembly of viral replication complexes, thanks to the ability of G3BP family members to self-assemble and bind DNA. Functionally, RNA dependent RNA polymerase. Replicates genomic and antigenomic RNA by recognizing replications specific signals. The early replication complex formed by the polyprotein P123 and nsP4 synthesizes minus-strand RNAs. The late replication complex composed of fully processed nsP1-nsP4 is responsible for the production of genomic and subgenomic plus-strand RNAs. The polypeptide is Polyprotein P1234 (Anopheles (Human)).